The following is a 276-amino-acid chain: Inositol-1-monophosphatase ImpA (276 aa).

Residues glutamate 74, aspartate 90, isoleucine 92, and aspartate 93 each contribute to the Mg(2+) site. Glutamate 74 contacts substrate. Substrate-binding positions include 92–95, arginine 192, and aspartate 221; that span reads IDGT. Mg(2+) is bound at residue aspartate 221.

Belongs to the inositol monophosphatase superfamily. Mg(2+) serves as cofactor.

It catalyses the reaction a myo-inositol phosphate + H2O = myo-inositol + phosphate. It functions in the pathway polyol metabolism; myo-inositol biosynthesis; myo-inositol from D-glucose 6-phosphate: step 2/2. Catalyzes the dephosphorylation of inositol 1-phosphate (I-1-P) to yield free myo-inositol, a key metabolite in mycobacteria. In Mycolicibacterium smegmatis (strain ATCC 700084 / mc(2)155) (Mycobacterium smegmatis), this protein is Inositol-1-monophosphatase ImpA (impA).